The sequence spans 418 residues: Serine--tRNA ligase (418 aa).

Threonine 226–glutamate 228 serves as a coordination point for L-serine. ATP contacts are provided by residues arginine 257–glutamate 259 and valine 273. Position 280 (glutamate 280) interacts with L-serine. Glutamate 344–serine 347 is an ATP binding site. An L-serine-binding site is contributed by threonine 379.

Belongs to the class-II aminoacyl-tRNA synthetase family. Type-1 seryl-tRNA synthetase subfamily. In terms of assembly, homodimer. The tRNA molecule binds across the dimer.

Its subcellular location is the cytoplasm. It carries out the reaction tRNA(Ser) + L-serine + ATP = L-seryl-tRNA(Ser) + AMP + diphosphate + H(+). It catalyses the reaction tRNA(Sec) + L-serine + ATP = L-seryl-tRNA(Sec) + AMP + diphosphate + H(+). It participates in aminoacyl-tRNA biosynthesis; selenocysteinyl-tRNA(Sec) biosynthesis; L-seryl-tRNA(Sec) from L-serine and tRNA(Sec): step 1/1. Catalyzes the attachment of serine to tRNA(Ser). Is also able to aminoacylate tRNA(Sec) with serine, to form the misacylated tRNA L-seryl-tRNA(Sec), which will be further converted into selenocysteinyl-tRNA(Sec). The polypeptide is Serine--tRNA ligase (Mycobacteroides abscessus (strain ATCC 19977 / DSM 44196 / CCUG 20993 / CIP 104536 / JCM 13569 / NCTC 13031 / TMC 1543 / L948) (Mycobacterium abscessus)).